The primary structure comprises 643 residues: Threonine--tRNA ligase (643 aa).

One can recognise a TGS domain in the interval 1–61 (MIKVSLKDGS…NEDVSLSICT (61 aa)). Residues 240 to 540 (DHNKLGRELK…LIEKYAGAFP (301 aa)) are catalytic. Residues Cys335, His386, and His517 each contribute to the Zn(2+) site.

It belongs to the class-II aminoacyl-tRNA synthetase family. As to quaternary structure, homodimer. Zn(2+) is required as a cofactor.

It is found in the cytoplasm. It catalyses the reaction tRNA(Thr) + L-threonine + ATP = L-threonyl-tRNA(Thr) + AMP + diphosphate + H(+). Catalyzes the attachment of threonine to tRNA(Thr) in a two-step reaction: L-threonine is first activated by ATP to form Thr-AMP and then transferred to the acceptor end of tRNA(Thr). Also edits incorrectly charged L-seryl-tRNA(Thr). In Clostridium botulinum (strain Alaska E43 / Type E3), this protein is Threonine--tRNA ligase.